Consider the following 151-residue polypeptide: MLIWITIGIVWAIDRVLKVLIQGNFVVGESVPVIPDFFHLTYVLNPGAAFGLLPGRTWIFIPAAIIVCAGIIYAQFKIPRQEWLMRLTLGLIGGGALGNLYDRLFIGKVVDYLDFQIWPFVFNFADSAIVVGVGLLMILMLLEDRKERKTE.

3 consecutive transmembrane segments (helical) span residues 33–53, 58–78, and 87–107; these read VIPD…FGLL, WIFI…QFKI, and LTLG…LFIG. Active-site residues include aspartate 111 and aspartate 126. Residues 120 to 140 form a helical membrane-spanning segment; the sequence is FVFNFADSAIVVGVGLLMILM.

Belongs to the peptidase A8 family.

It localises to the cell membrane. The catalysed reaction is Release of signal peptides from bacterial membrane prolipoproteins. Hydrolyzes -Xaa-Yaa-Zaa-|-(S,diacylglyceryl)Cys-, in which Xaa is hydrophobic (preferably Leu), and Yaa (Ala or Ser) and Zaa (Gly or Ala) have small, neutral side chains.. The protein operates within protein modification; lipoprotein biosynthesis (signal peptide cleavage). This protein specifically catalyzes the removal of signal peptides from prolipoproteins. This chain is Lipoprotein signal peptidase, found in Desulfitobacterium hafniense (strain DSM 10664 / DCB-2).